The chain runs to 192 residues: Virion infectivity factor (192 aa).

The tract at residues 14 to 17 is interaction with host APOBEC3F; F1-box; it reads DRMR. Positions 40–44 are interaction with host APOBEC3G; G-box; that stretch reads YRHHF. Residues 54–72 form an interaction with host APOBEC3F and APOBEC3G; FG-box region; the sequence is EVHIPLETAELVITTYWGL. Residues 74–79 are interaction with host APOBEC3F; F2-box; sequence PGEREW. The RNA-binding stretch occupies residues 75–114; the sequence is GEREWHLGQGVSIEWRQGRYRTQIDPGLADQLIHIYYFDC. At T96 the chain carries Phosphothreonine; by host MAP4K1. Zn(2+)-binding residues include H108, C114, C133, and H139. The short motif at 108-139 is the HCCH motif element; sequence HIYYFDCFSESAIRKAILGHKISPRCNYQAGH. S144 is modified (phosphoserine; by host). Residues 144–153 carry the BC-box-like motif motif; the sequence is SLQYLALTAL. Residues 151–164 form a multimerization region; the sequence is TALIAPKKTKPPLP. Residues 151-180 form an SOCS box-like region; the sequence is TALIAPKKTKPPLPSVQKLVEDRWNKPQKT. The segment at 164 to 192 is disordered; that stretch reads PSVQKLVEDRWNKPQKTRGHRESHTMNGH. The residue at position 165 (S165) is a Phosphoserine; by host MAP4K1. The membrane association stretch occupies residues 171-172; that stretch reads ED. The segment covering 183–192 has biased composition (basic and acidic residues); the sequence is HRESHTMNGH. Phosphothreonine; by host is present on T188.

Belongs to the primate lentivirus group Vif protein family. Homomultimer; in vitro and presumably in vivo. Interacts with viral RNA and Pr55Gag precursor; these interactions mediate Vif incorporation into the virion. Interacts with the viral reverse transcriptase. Forms cullin-5-RING E3 ubiquitin-protein ligase complex (ECS complex) by interacting with host CUL5, RBX2, elongin BC complex (ELOB and ELOC) and CBFB/CBF-beta. Within the ECS complex, Vif interacts directly with host CUL5, ELOC and APOBEC (APOBEC3F and APOBEC3G) substrates. The ECS complex also contains some single-stranded RNA (ssRNA) that acts as a glue that bridges Vif with APOBEC (APOBEC3F and APOBEC3G) substrates. Interacts with host UBCE7IP1 isoform 3/ZIN and possibly with SAT. Interacts with host tyrosine kinases HCK and FYN; these interactions may decrease level of phosphorylated APOBEC3G incorporation into virions. Interacts with host ABCE1; this interaction may play a role in protecting viral RNA from damage during viral assembly. Interacts with host MDM2; this interaction targets Vif for degradation by the proteasome. In terms of processing, processed in virion by the viral protease. Highly phosphorylated on serine and threonine residues. Post-translationally, polyubiquitinated and degraded by the proteasome in the presence of APOBEC3G.

The protein localises to the host cytoplasm. The protein resides in the host cell membrane. Its subcellular location is the virion. Functionally, counteracts the innate antiviral activity of host APOBEC3F and APOBEC3G by promoting their ubiquitination and degradation. Acts as a substrate recognition component of an E3 ubiquitin-protein ligase complex: mechanistically, Vif hijacks a host cullin-5-RING E3 ubiquitin-protein ligase complex (ECS complex) and the transcription coactivator CBFB/CBF-beta to form an active E3 ubiquitin-protein ligase complex that targets APOBEC3G and APOBEC3F for polyubiquitination, leading to their degradation by the proteasome. Vif interaction with APOBEC3G also blocks its cytidine deaminase activity in a proteasome-independent manner, suggesting a dual inhibitory mechanism. May interact directly with APOBEC3G mRNA in order to inhibit its translation. Association with CBFB/CBF-beta also inhibits the transcription coactivator activity of CBFB/CBF-beta. Seems to play a role in viral morphology by affecting the stability of the viral nucleoprotein core. Finally, Vif also contributes to the G2 cell cycle arrest observed in HIV infected cells. This is Virion infectivity factor from Homo sapiens (Human).